Consider the following 215-residue polypeptide: Large ribosomal subunit protein bL25 (215 aa).

2 stretches are compositionally biased toward polar residues: residues 1-19 (MAKSTVNKLSVSVRTNTGK) and 206-215 (ENKTAATESE). Disordered regions lie at residues 1-29 (MAKSTVNKLSVSVRTNTGKGASRRARRDG) and 190-215 (AKYAGEAHEAPEVGTAENKTAATESE).

Belongs to the bacterial ribosomal protein bL25 family. CTC subfamily. In terms of assembly, part of the 50S ribosomal subunit; part of the 5S rRNA/L5/L18/L25 subcomplex. Contacts the 5S rRNA. Binds to the 5S rRNA independently of L5 and L18.

Its function is as follows. This is one of the proteins that binds to the 5S RNA in the ribosome where it forms part of the central protuberance. The chain is Large ribosomal subunit protein bL25 from Mycobacterium leprae (strain TN).